Reading from the N-terminus, the 399-residue chain is MRPERPRPRGSAPGPMETPPWDPARNDSLPPTLTPAVPPYVKLGLTVVYTVFYALLFVFIYVQLWLVLRYRHKRLSYQSVFLFLCLFWASLRTVLFSFYFKDFVAANSLSPFVFWLLYCFPVCLQFFTLTLMNLYFTQVIFKAKSKYSPELLKYRLPLYLASLFISLVFLLVNLTCAVLVKTGNWERKVIVSVRVAINDTLFVLCAVSLSICLYKISKMSLANIYLESKGSSVCQVTAIGVTVILLYTSRACYNLFILSFSQNKSVHSFDYDWYNVSDQADLKNQLGDAGYVLFGVVLFVWELLPTTLVVYFFRVRNPTKDLTNPGMVPSHGFSPRSYFFDNPRRYDSDDDLAWNIAPQGLQGGFAPDYYDWGQQTNSFLAQAGTLQDSTLDPDKPSLG.

Residues 1 to 22 (MRPERPRPRGSAPGPMETPPWD) are disordered. The Lumenal portion of the chain corresponds to 1 to 46 (MRPERPRPRGSAPGPMETPPWDPARNDSLPPTLTPAVPPYVKLGLT). An N-linked (GlcNAc...) asparagine glycan is attached at asparagine 26. A helical transmembrane segment spans residues 47 to 67 (VVYTVFYALLFVFIYVQLWLV). Residues 68-79 (LRYRHKRLSYQS) are Cytoplasmic-facing. A helical transmembrane segment spans residues 80–100 (VFLFLCLFWASLRTVLFSFYF). Residues 101 to 111 (KDFVAANSLSP) lie on the Lumenal side of the membrane. Residues 112-132 (FVFWLLYCFPVCLQFFTLTLM) form a helical membrane-spanning segment. The Cytoplasmic portion of the chain corresponds to 133–159 (NLYFTQVIFKAKSKYSPELLKYRLPLY). Residues 160 to 180 (LASLFISLVFLLVNLTCAVLV) form a helical membrane-spanning segment. Residues 181–188 (KTGNWERK) are Lumenal-facing. The chain crosses the membrane as a helical span at residues 189-209 (VIVSVRVAINDTLFVLCAVSL). The Cytoplasmic segment spans residues 210–237 (SICLYKISKMSLANIYLESKGSSVCQVT). The chain crosses the membrane as a helical span at residues 238–258 (AIGVTVILLYTSRACYNLFIL). Topologically, residues 259–292 (SFSQNKSVHSFDYDWYNVSDQADLKNQLGDAGYV) are lumenal. Asparagine 263 and asparagine 275 each carry an N-linked (GlcNAc...) asparagine glycan. The helical transmembrane segment at 293–313 (LFGVVLFVWELLPTTLVVYFF) threads the bilayer. Over 314–399 (RVRNPTKDLT…TLDPDKPSLG (86 aa)) the chain is Cytoplasmic.

Belongs to the GPR137 family. As to quaternary structure, interaction with RRAGA; increases RRAGA recruitment to lysosomes. Interacts with MTOR; this interaction is amino acid sensitive. Expressed in kidney, heart, brain and placenta.

The protein localises to the lysosome membrane. In terms of biological role, lysosomal integral membrane protein that regulates the localization and activity of mTORC1, a signaling complex promoting cell growth in response to growth factors, energy levels, and amino acids. Interacts with Rag GTPases and increases the lysosomial localization and activity of Rag GTPases and thereby regulates mTORC1 translocation and activity in lysosome. Involved in the regulation of lysosomal morphology and autophagy. Functionally, also acts as a negative regulator of osteoclast activity. Involved in interleukin-4-induced M2 macrophage polarization. The protein is Integral membrane protein GPR137B (GPR137B) of Homo sapiens (Human).